The sequence spans 382 residues: Lipid-A-disaccharide synthase (382 aa).

It belongs to the LpxB family.

It catalyses the reaction a lipid X + a UDP-2-N,3-O-bis[(3R)-3-hydroxyacyl]-alpha-D-glucosamine = a lipid A disaccharide + UDP + H(+). It functions in the pathway bacterial outer membrane biogenesis; LPS lipid A biosynthesis. Its function is as follows. Condensation of UDP-2,3-diacylglucosamine and 2,3-diacylglucosamine-1-phosphate to form lipid A disaccharide, a precursor of lipid A, a phosphorylated glycolipid that anchors the lipopolysaccharide to the outer membrane of the cell. This chain is Lipid-A-disaccharide synthase, found in Alteromonas mediterranea (strain DSM 17117 / CIP 110805 / LMG 28347 / Deep ecotype).